A 325-amino-acid chain; its full sequence is Secreted RxLR effector protein RXLR-C07 (325 aa).

The N-terminal stretch at 1-19 (MQGVRITILWCIVLATIYA) is a signal peptide. TPR repeat units follow at residues 37–75 (RGLR…GEER), 92–125 (AQIL…IEKI), 134–167 (GLSL…VKKG), 218–251 (AELY…FLQR), and 260–293 (AFSL…AVSI). The RxLR-dEER signature appears at 37–75 (RGLRNAGMKANDERMFKDAIEKLRHAISLLHNRVFGEER).

This sequence belongs to the RxLR effector family.

The protein resides in the secreted. Its subcellular location is the host cytoplasm. It localises to the host nucleus. The protein localises to the host nucleolus. Its function is as follows. Secreted effector that suppresses pattern-triggered immunity (PTI) in plant host. The chain is Secreted RxLR effector protein RXLR-C07 from Plasmopara halstedii (Downy mildew of sunflower).